The following is a 241-amino-acid chain: Probable xyloglucan-specific endo-beta-1,4-glucanase A (241 aa).

The first 15 residues, 1–15 (MKVLALSALLSLASA), serve as a signal peptide directing secretion. Asn47 carries an N-linked (GlcNAc...) asparagine glycan.

The protein belongs to the glycosyl hydrolase 12 (cellulase H) family.

It localises to the secreted. It catalyses the reaction xyloglucan + H2O = xyloglucan oligosaccharides.. Its function is as follows. Catalyzes endohydrolysis of 1,4-beta-D-glucosidic linkages in xyloglucan with retention of the beta-configuration of the glycosyl residues. Specific for xyloglucan and does not hydrolyze other cell wall components. This Aspergillus niger (strain ATCC MYA-4892 / CBS 513.88 / FGSC A1513) protein is Probable xyloglucan-specific endo-beta-1,4-glucanase A (xgeA).